The primary structure comprises 275 residues: Ribosomal RNA small subunit methyltransferase A (275 aa).

The S-adenosyl-L-methionine site is built by Asn15, Leu17, Gly42, Glu63, Asp88, and Asn111.

It belongs to the class I-like SAM-binding methyltransferase superfamily. rRNA adenine N(6)-methyltransferase family. RsmA subfamily.

It is found in the cytoplasm. The catalysed reaction is adenosine(1518)/adenosine(1519) in 16S rRNA + 4 S-adenosyl-L-methionine = N(6)-dimethyladenosine(1518)/N(6)-dimethyladenosine(1519) in 16S rRNA + 4 S-adenosyl-L-homocysteine + 4 H(+). Functionally, specifically dimethylates two adjacent adenosines (A1518 and A1519) in the loop of a conserved hairpin near the 3'-end of 16S rRNA in the 30S particle. May play a critical role in biogenesis of 30S subunits. The protein is Ribosomal RNA small subunit methyltransferase A of Geobacter metallireducens (strain ATCC 53774 / DSM 7210 / GS-15).